The chain runs to 271 residues: Hachiman protein HamA (271 aa).

Component of antiviral defense system Hachiman, composed of HamA and HamB. Expression of Hachiman in B.subtilis (strain BEST7003) confers resistance to phages phi105, phi29, phi3T, rho14, SBSphiJ, SpBeta and SPR. This chain is Hachiman protein HamA, found in Bacillus cereus.